The sequence spans 353 residues: Photosystem II D2 protein (353 aa).

The residue at position 2 (Thr-2) is an N-acetylthreonine. A Phosphothreonine modification is found at Thr-2. A helical transmembrane segment spans residues 41–61 (CAYFALGGWFTGTTFVTSWYT). Residue His-118 coordinates chlorophyll a. The chain crosses the membrane as a helical span at residues 125–141 (GFMLRQFELARSVQLRP). Pheophytin a contacts are provided by Gln-130 and Asn-143. A helical membrane pass occupies residues 153–166 (VFVSVFLIYPLGQS). His-198 is a chlorophyll a binding site. A helical membrane pass occupies residues 208–228 (AALLCAIHGATVENTLFEDGD). The a plastoquinone site is built by His-215 and Phe-262. His-215 is a binding site for Fe cation. His-269 lines the Fe cation pocket. The chain crosses the membrane as a helical span at residues 279–295 (GLWMSAIGVVGLALNLR).

It belongs to the reaction center PufL/M/PsbA/D family. As to quaternary structure, PSII is composed of 1 copy each of membrane proteins PsbA, PsbB, PsbC, PsbD, PsbE, PsbF, PsbH, PsbI, PsbJ, PsbK, PsbL, PsbM, PsbT, PsbX, PsbY, PsbZ, Psb30/Ycf12, at least 3 peripheral proteins of the oxygen-evolving complex and a large number of cofactors. It forms dimeric complexes. The D1/D2 heterodimer binds P680, chlorophylls that are the primary electron donor of PSII, and subsequent electron acceptors. It shares a non-heme iron and each subunit binds pheophytin, quinone, additional chlorophylls, carotenoids and lipids. There is also a Cl(-1) ion associated with D1 and D2, which is required for oxygen evolution. The PSII complex binds additional chlorophylls, carotenoids and specific lipids. is required as a cofactor.

The protein localises to the plastid. It localises to the chloroplast thylakoid membrane. The enzyme catalyses 2 a plastoquinone + 4 hnu + 2 H2O = 2 a plastoquinol + O2. Functionally, photosystem II (PSII) is a light-driven water:plastoquinone oxidoreductase that uses light energy to abstract electrons from H(2)O, generating O(2) and a proton gradient subsequently used for ATP formation. It consists of a core antenna complex that captures photons, and an electron transfer chain that converts photonic excitation into a charge separation. The D1/D2 (PsbA/PsbD) reaction center heterodimer binds P680, the primary electron donor of PSII as well as several subsequent electron acceptors. D2 is needed for assembly of a stable PSII complex. This Cycas taitungensis (Prince sago) protein is Photosystem II D2 protein.